The chain runs to 285 residues: Phosphatidylglycerol--prolipoprotein diacylglyceryl transferase (285 aa).

The next 5 membrane-spanning stretches (helical) occupy residues 17-37, 43-63, 78-98, 113-133, and 139-159; these read ALGLSPIAFDLGVWHLFGLTL, WYALAYITGILLAWRYVLFLL, LVFWSTLGILVGGRLAYVLFY, WEGGMSYHGGMIGVFLAIWWV, and LSWLRIADYIGCAAPIGLFLG. A 1,2-diacyl-sn-glycero-3-phospho-(1'-sn-glycerol) is bound at residue R160. The next 3 helical transmembrane spans lie at 195-215, 223-243, and 256-276; these read LYEAGLEGILLFAFLNYQFFA, GKLAGFFLVGYGLSRFIVEWF, and GLTMGQTLTIPMVIAGLWLII.

The protein belongs to the Lgt family.

Its subcellular location is the cell inner membrane. It catalyses the reaction L-cysteinyl-[prolipoprotein] + a 1,2-diacyl-sn-glycero-3-phospho-(1'-sn-glycerol) = an S-1,2-diacyl-sn-glyceryl-L-cysteinyl-[prolipoprotein] + sn-glycerol 1-phosphate + H(+). It participates in protein modification; lipoprotein biosynthesis (diacylglyceryl transfer). In terms of biological role, catalyzes the transfer of the diacylglyceryl group from phosphatidylglycerol to the sulfhydryl group of the N-terminal cysteine of a prolipoprotein, the first step in the formation of mature lipoproteins. In Zymomonas mobilis subsp. mobilis (strain ATCC 31821 / ZM4 / CP4), this protein is Phosphatidylglycerol--prolipoprotein diacylglyceryl transferase.